Reading from the N-terminus, the 66-residue chain is Alpha-actitoxin-Ms11a-1 (66 aa).

The N-terminal stretch at 1 to 24 is a signal peptide; sequence MASKIFFVLAVFLVMSAVLPESFA. Cystine bridges form between Cys26–Cys41, Cys33–Cys46, and Cys40–Cys61.

The protein resides in the secreted. It localises to the nematocyst. In terms of biological role, alpha-toxins act on postsynaptic membranes, they bind to the nicotinic acetylcholine receptors (nAChR) and thus inhibit them. This toxin competes with alpha-bungarotoxin for binding to orthosteric sites on muscle-type T.carlifornicus (IC(50)=408 nM) and human alpha-7/CHRNA7 nAChRs (IC(50)=14.16 uM). The protein is Alpha-actitoxin-Ms11a-1 of Metridium senile (Brown sea anemone).